Here is a 298-residue protein sequence, read N- to C-terminus: Dioxygenase aneA (298 aa).

Residues H134, D136, and H213 each contribute to the Fe cation site.

This sequence belongs to the PhyH family. Homodimer. Fe cation is required as a cofactor.

The enzyme catalyses aculene D + 2-oxoglutarate + O2 = aculene C + succinate + CO2 + H2O. The catalysed reaction is aculene B + 2-oxoglutarate + O2 = aculene A + succinate + CO2 + H2O. It participates in secondary metabolite biosynthesis. Dioxygenase; part of the gene cluster that mediates the biosynthesis of aculenes, a unique type of norsesquiterpenes that contain a nordaucane skeleton linked to an L-proline moiety and are of mixed biosynthetic origin. The pathway begins with the synthesis of dauca-4,7-diene by the terpene cyclase aneC using farnesyl pyrophosphate (FPP) as substrate. The cytochrome P450 monooxygenase aneF then performs the initial oxidation at C-12 of dauca-4,7-diene to yield asperaculane D. Asperaculane D is substrate of the cytochrome P450 monooxygenase aneD for C-10 hydroxylation to yield asperaculane E. The cytochrome P450 monooxygenase aneG then converts asperaculane E into aculene D via C-2 oxidation. The monomodular nonribosomal peptide synthase aneB adenylates L-proline and the thiohydrolase aneE transfers this activated L-proline derivative to aculenes D and C to produce respectively aculenes B and A. The dioxygenase aneA converts aculene D into aculene C, and aculene B into aculene A by introducing the 5,6-alkene moiety. Asperculanes A, B, C and F, as well as 14-prolyl asperculane C, might be shunt products of the pathway. In Aspergillus aculeatus (strain ATCC 16872 / CBS 172.66 / WB 5094), this protein is Dioxygenase aneA.